Reading from the N-terminus, the 981-residue chain is Translation initiation factor IF-2 (981 aa).

Residues 31 to 370 (FVKSASSTVE…SKRAKRAEYE (340 aa)) form a disordered region. Residues 64–87 (GAAAPAARPAAKPGAPSPSAAKPG) show a composition bias toward low complexity. Positions 88–111 (GPRPGPKPAAPAPAAPAAPAPAAP) are enriched in pro residues. Low complexity predominate over residues 112-121 (AAPAAAAPAA). The span at 136 to 145 (PAQPARPAPA) shows a compositional bias: pro residues. The segment covering 146 to 165 (APAASAPAAPAAPAAPSTGA) has biased composition (low complexity). Pro residues predominate over residues 256 to 269 (RPSPGSMPPRPNPG). The segment covering 270–279 (AMPARSARPA) has biased composition (low complexity). The segment covering 280–339 (PGGGGRPGRPGGAPGGRPGGGGGGYRGGGAPGAGAGAGAPGGAAPAGGFRGRPGGGGRPG) has biased composition (gly residues). Residues 356-365 (RRGRKSKRAK) are compositionally biased toward basic residues. One can recognise a tr-type G domain in the interval 477-649 (SRPPVVTVMG…VLLTADASLD (173 aa)). Residues 486 to 493 (GHVDHGKT) form a G1 region. Residue 486-493 (GHVDHGKT) coordinates GTP. A G2 region spans residues 511–515 (GITQH). Positions 536 to 539 (DTPG) are G3. Residues 536–540 (DTPGH) and 590–593 (NKID) contribute to the GTP site. Residues 590–593 (NKID) are G4. The interval 626–628 (SAK) is G5.

It belongs to the TRAFAC class translation factor GTPase superfamily. Classic translation factor GTPase family. IF-2 subfamily.

The protein resides in the cytoplasm. One of the essential components for the initiation of protein synthesis. Protects formylmethionyl-tRNA from spontaneous hydrolysis and promotes its binding to the 30S ribosomal subunits. Also involved in the hydrolysis of GTP during the formation of the 70S ribosomal complex. This is Translation initiation factor IF-2 from Rhodococcus erythropolis (strain PR4 / NBRC 100887).